The chain runs to 226 residues: Transcription repressor OFP12 (226 aa).

Residues serine 68–serine 87 show a composition bias toward low complexity. Residues serine 68–proline 104 form a disordered region. An OVATE domain is found at valine 152 to serine 217.

In terms of assembly, interacts with KNAT1, KNAT2, KNAT3 and KNAT4. In terms of tissue distribution, expressed in roots, shoots, stems, flower buds and siliques.

The protein localises to the nucleus. Its function is as follows. Transcriptional repressor that regulates multiple aspects of plant growth and development through the regulation of BEL1-LIKE (BLH) and KNOX TALE (KNAT) homeodomain transcription factors. The chain is Transcription repressor OFP12 (OFP12) from Arabidopsis thaliana (Mouse-ear cress).